The sequence spans 801 residues: Lon protease 2 (801 aa).

The region spanning 14–209 (LPMLPVRDIV…LVNEILAAEL (196 aa)) is the Lon N-terminal domain. 361 to 368 (GPPGVGKT) contributes to the ATP binding site. Positions 597-778 (DSQVGVVQGL…DEVFAVAFDK (182 aa)) constitute a Lon proteolytic domain. Active-site residues include S684 and K727. The span at 780-791 (AKGQEKKPAAKK) shows a compositional bias: basic and acidic residues. The segment at 780-801 (AKGQEKKPAAKKDPKKTKSLAA) is disordered. A compositionally biased stretch (basic residues) spans 792 to 801 (DPKKTKSLAA).

It belongs to the peptidase S16 family. In terms of assembly, homohexamer. Organized in a ring with a central cavity.

It is found in the cytoplasm. It carries out the reaction Hydrolysis of proteins in presence of ATP.. Functionally, ATP-dependent serine protease that mediates the selective degradation of mutant and abnormal proteins as well as certain short-lived regulatory proteins. Required for cellular homeostasis and for survival from DNA damage and developmental changes induced by stress. Degrades polypeptides processively to yield small peptide fragments that are 5 to 10 amino acids long. Binds to DNA in a double-stranded, site-specific manner. This is Lon protease 2 from Bdellovibrio bacteriovorus (strain ATCC 15356 / DSM 50701 / NCIMB 9529 / HD100).